Consider the following 765-residue polypeptide: MPRSPGTRLKPAKYIPVATAAALLVGSSTLFFVFTCPWLTRAVSPAVPVYNGIIFLFVLANFSMATFMDPGVFPRADEDEDKEDDFRAPLYKNVDVRGIQVRMKWCATCHFYRPPRCSHCSVCDNCVEDFDHHCPWVNNCIGRRNYRYFFLFLLSLSAHMVGVVAFGLVYVLNHAEGLGAAHTTITMAVMCVAGLFFIPVIGLTGFHVVLVTRGRTTNEHVTGKFRGGVNPFTRGCYGNVEHVLCSPLAPRYVVEPPRLPLAARLKPPFLRPELLERAAPLKVKLSDNGLKAGLGRSKSKGSLDRLDEKPLDLGPPLPPKAEAGTFGGDLQTPRPSSAESALSAQRTSPPTPAMYKFRPAFPSGPKAPFCGPGEQVPGPDSLTLGEDSIHSLDFASEPSLDLPDYTPGGLHAAYPPSPPLSAADTFSGALRSLSLKAAGRRGGDHVALQPLRSEGGPPTPHRGIFAPHALPNRNGSLSYDSLLNPGSPGGHTCPAHPSAGVASYRSPYLHPGAVGEPPRPPPRSFSPVLGPRPREPSPVRYDNLSRTIMASIQERKDREERERLLRSQADSLFGDSGVYDAPSSYSLQQASALADGARGPALRYGSRDDLVAGPGFGGARNPALQTSVSSLSSAVSRAPRTSSSSLQADLANNNAPGPRPGSGSHRSPVRQGPPSPPSTPRSPSYAGPKAVAFIHTDLPESPPSLAVQRDHPQLKTPPSKLNGQSPGLARLGPAAGPPGPSASPARHTLVKKVSGVGGTTYEISV.

Residues 1 to 13 (MPRSPGTRLKPAK) lie on the Cytoplasmic side of the membrane. The chain crosses the membrane as a helical span at residues 14 to 34 (YIPVATAAALLVGSSTLFFVF). Topologically, residues 35–52 (TCPWLTRAVSPAVPVYNG) are lumenal. Residues 53–73 (IIFLFVLANFSMATFMDPGVF) form a helical membrane-spanning segment. Residues 74-148 (PRADEDEDKE…NCIGRRNYRY (75 aa)) are Cytoplasmic-facing. The 51-residue stretch at 104–154 (KWCATCHFYRPPRCSHCSVCDNCVEDFDHHCPWVNNCIGRRNYRYFFLFLL) folds into the DHHC domain. Cysteine 134 (S-palmitoyl cysteine intermediate) is an active-site residue. The chain crosses the membrane as a helical span at residues 149–169 (FFLFLLSLSAHMVGVVAFGLV). At 170–190 (YVLNHAEGLGAAHTTITMAVM) the chain is on the lumenal side. Residues 191–211 (CVAGLFFIPVIGLTGFHVVLV) traverse the membrane as a helical segment. At 212–765 (TRGRTTNEHV…VGGTTYEISV (554 aa)) the chain is on the cytoplasmic side. Positions 290 to 386 (LKAGLGRSKS…PGPDSLTLGE (97 aa)) are disordered. Over residues 301-311 (GSLDRLDEKPL) the composition is skewed to basic and acidic residues. A compositionally biased stretch (polar residues) spans 333-348 (PRPSSAESALSAQRTS). Serine 337 is modified (phosphoserine). Arginine 441 bears the Omega-N-methylarginine mark. The tract at residues 447–542 (ALQPLRSEGG…PREPSPVRYD (96 aa)) is disordered. Residues serine 606 and serine 627 each carry the phosphoserine modification. The disordered stretch occupies residues 630–747 (SLSSAVSRAP…PGPSASPARH (118 aa)). Polar residues predominate over residues 639-655 (PRTSSSSLQADLANNNA). Residues 671 to 680 (QGPPSPPSTP) show a composition bias toward pro residues. A phosphoserine mark is found at serine 675, serine 682, serine 725, and serine 743.

It belongs to the DHHC palmitoyltransferase family. ERF2/ZDHHC9 subfamily.

The protein resides in the golgi apparatus membrane. The protein localises to the mitochondrion membrane. It carries out the reaction L-cysteinyl-[protein] + hexadecanoyl-CoA = S-hexadecanoyl-L-cysteinyl-[protein] + CoA. Its function is as follows. Palmitoyltransferase that catalyzes the addition of palmitate onto various protein substrates and therefore functions in several unrelated biological processes. Through the palmitoylation of ABCA1 regulates the localization of the transporter to the plasma membrane and thereby regulates its function in cholesterol and phospholipid efflux. Could also pamitoylate the D(2) dopamine receptor DRD2 and regulate its stability and localization to the plasma membrane. Could also play a role in glutamatergic transmission. The chain is Palmitoyltransferase ZDHHC8 from Canis lupus familiaris (Dog).